Consider the following 346-residue polypeptide: MDLQKQLEELKISTQEKLKEMTGNHTKELQDLRVQVLGKKGSLTELLKGLKDLSNDLRPVVGKQVNEVRDILTKAFEEQAKVVEAAKIQAQLESESVDVTLPGRQMTLGHRHVLTQTSEEIEDIFLGMGFQVVDGFEVEKDYYNFERMNLPKDHPARDMQDTFYITEEILLRTHTSPVQARTMDQHDFSKGPLKMISPGRVFRRDTDDATHSHQFHQIEGLVVGENISMGDLKGTLQLISQKMFGAERKIRLRPSYFPFTEPSVEVDVSCFKCGGKGCNVCKQTGWIEILGAGMVHPSVLEMSGIDSEKYSGFAFGLGQERIAMLRYGINDIRGFYQGDVRFTDQF.

Glu-261 provides a ligand contact to Mg(2+).

Belongs to the class-II aminoacyl-tRNA synthetase family. Phe-tRNA synthetase alpha subunit type 1 subfamily. Tetramer of two alpha and two beta subunits. Mg(2+) is required as a cofactor.

It localises to the cytoplasm. The enzyme catalyses tRNA(Phe) + L-phenylalanine + ATP = L-phenylalanyl-tRNA(Phe) + AMP + diphosphate + H(+). In Streptococcus agalactiae serotype Ia (strain ATCC 27591 / A909 / CDC SS700), this protein is Phenylalanine--tRNA ligase alpha subunit.